The primary structure comprises 439 residues: MADFAQLEVYIGDLSTAITSLITQCQRNGHATGSPSENLSRLFGLEAPTEAHRARESALVILTKLQIMLAGPTDLLQQMTIQTQLLACIRWLGEFQVPACIPLDGSALMKDVSELIDVPENQLGRIVRMAATCGFLREPEPGHITHSALSASFVTNPSYLDAAMFLAETAAPAALDMVAATKQRLGSSEPASQNVVFDQGFFSAANKTQLRRLQRQWQAYLRHGMAHLCDITTDFLTCLEPLRMGNASIVEVGARSAERAMALVDQYPTLHFTVQLSPASTLSSASKNGTAASKVRHPRIRVQHRVPGTPQPIQDAMVYIINFPVPEPGVSYNSPVAQISAELRAHLAPLRMNRSATIVLTAPSLPERGNVAAVGVARIRDLSLLQLANEQEVEMSDLLSLLNGVGDGEGRLVLVNEMRSAGNHGAVALEVKYQSYTDR.

Residues 79 to 149 form the HTH iclR-type domain; that stretch reads MTIQTQLLAC…EPGHITHSAL (71 aa). The segment at residues 109 to 128 is a DNA-binding region (H-T-H motif); sequence MKDVSELIDVPENQLGRIVR.

The protein localises to the nucleus. Functionally, transcriptional coactivator; part of the gene cluster that mediates the biosynthesis of agnestins, dihydroxy-xanthone metabolites. This is Agnestins biosynthesis cluster transcriptional coactivator AgnL9 from Paecilomyces divaricatus (Penicillium divaricatum).